The primary structure comprises 210 residues: Outer-membrane lipoprotein carrier protein (210 aa).

An N-terminal signal peptide occupies residues 1–23; it reads MLMFSRFRYIFFAVALLSGPVCA.

The protein belongs to the LolA family. As to quaternary structure, monomer.

The protein resides in the periplasm. Its function is as follows. Participates in the translocation of lipoproteins from the inner membrane to the outer membrane. Only forms a complex with a lipoprotein if the residue after the N-terminal Cys is not an aspartate (The Asp acts as a targeting signal to indicate that the lipoprotein should stay in the inner membrane). This is Outer-membrane lipoprotein carrier protein from Xylella fastidiosa (strain Temecula1 / ATCC 700964).